The chain runs to 326 residues: tRNA(Ile)-lysidine synthase (326 aa).

Residue 33–38 (SGGPDS) coordinates ATP.

Belongs to the tRNA(Ile)-lysidine synthase family.

It localises to the cytoplasm. The enzyme catalyses cytidine(34) in tRNA(Ile2) + L-lysine + ATP = lysidine(34) in tRNA(Ile2) + AMP + diphosphate + H(+). Its function is as follows. Ligates lysine onto the cytidine present at position 34 of the AUA codon-specific tRNA(Ile) that contains the anticodon CAU, in an ATP-dependent manner. Cytidine is converted to lysidine, thus changing the amino acid specificity of the tRNA from methionine to isoleucine. The polypeptide is tRNA(Ile)-lysidine synthase (Novosphingobium aromaticivorans (strain ATCC 700278 / DSM 12444 / CCUG 56034 / CIP 105152 / NBRC 16084 / F199)).